Reading from the N-terminus, the 316-residue chain is Transaldolase (316 aa).

Lys-132 acts as the Schiff-base intermediate with substrate in catalysis.

Belongs to the transaldolase family. Type 1 subfamily.

The protein localises to the cytoplasm. The catalysed reaction is D-sedoheptulose 7-phosphate + D-glyceraldehyde 3-phosphate = D-erythrose 4-phosphate + beta-D-fructose 6-phosphate. The protein operates within carbohydrate degradation; pentose phosphate pathway; D-glyceraldehyde 3-phosphate and beta-D-fructose 6-phosphate from D-ribose 5-phosphate and D-xylulose 5-phosphate (non-oxidative stage): step 2/3. Functionally, transaldolase is important for the balance of metabolites in the pentose-phosphate pathway. The chain is Transaldolase from Vibrio cholerae serotype O1 (strain ATCC 39315 / El Tor Inaba N16961).